A 374-amino-acid chain; its full sequence is Anhydro-N-acetylmuramic acid kinase (374 aa).

12 to 19 (GTSLDGVD) contributes to the ATP binding site.

Belongs to the anhydro-N-acetylmuramic acid kinase family.

The enzyme catalyses 1,6-anhydro-N-acetyl-beta-muramate + ATP + H2O = N-acetyl-D-muramate 6-phosphate + ADP + H(+). It participates in amino-sugar metabolism; 1,6-anhydro-N-acetylmuramate degradation. Its pathway is cell wall biogenesis; peptidoglycan recycling. In terms of biological role, catalyzes the specific phosphorylation of 1,6-anhydro-N-acetylmuramic acid (anhMurNAc) with the simultaneous cleavage of the 1,6-anhydro ring, generating MurNAc-6-P. Is required for the utilization of anhMurNAc either imported from the medium or derived from its own cell wall murein, and thus plays a role in cell wall recycling. The chain is Anhydro-N-acetylmuramic acid kinase from Enterobacter sp. (strain 638).